A 349-amino-acid polypeptide reads, in one-letter code: Leukotriene B4 receptor 1 (349 aa).

Topologically, residues 1–19 (MNTTSPAAPSSSGVSFISL) are extracellular. Residue Asn-2 is glycosylated (N-linked (GlcNAc...) asparagine). Residues 20–42 (LVIIVLSVALAVGLPGNSFVVWS) form a helical membrane-spanning segment. Topologically, residues 43–54 (ILAKLRKRSVTA) are cytoplasmic. A helical membrane pass occupies residues 55–75 (LMVLHLALADLAVLLTAPFFL). Residues 76–91 (YSVAQGTWTFGLSSCR) are Extracellular-facing. A helical membrane pass occupies residues 92–113 (LFHYVCGVSMYASVLLIMTMSL). Residues 114-138 (DRSLAVALPFVSQKLRTKAVAWRVL) are Cytoplasmic-facing. Residues 139-159 (AGIWVMSVLLATPVLLYRTVH) traverse the membrane as a helical segment. Residues 160–179 (LGLNNRSLTCFLKYPSERHR) lie on the Extracellular side of the membrane. Asn-164 carries an N-linked (GlcNAc...) asparagine glycan. The helical transmembrane segment at 180-200 (AFHLFFEVITGFLLPFLVVVA) threads the bilayer. Topologically, residues 201–222 (SYCDIGRRLRARRFRRSRRTGR) are cytoplasmic. The chain crosses the membrane as a helical span at residues 223–243 (LVALIILAFAAFWLPYHVVNL). The Extracellular segment spans residues 244-269 (AEGFRAAAGKALGSGPVGRRLLLARH). The chain crosses the membrane as a helical span at residues 270–290 (VLITLAFLSSSVNPLLYACAG). Residues 291 to 349 (GGLLRSAGVGFIAKLLEGTGSETSSSRRKGTLAQTLRGTPASPEPDPAESLTASTNPLE) are Cytoplasmic-facing. Residues 311 to 349 (SETSSSRRKGTLAQTLRGTPASPEPDPAESLTASTNPLE) form a disordered region.

The protein belongs to the G-protein coupled receptor 1 family. Phosphorylated by GRK6 upon leukotriene B4 binding; which promotes desensitization.

It is found in the cell membrane. Its function is as follows. Receptor for extracellular ATP &gt; UTP and ADP. The activity of this receptor is mediated by G proteins which activate a phosphatidylinositol-calcium second messenger system. May be the cardiac P2Y receptor involved in the regulation of cardiac muscle contraction through modulation of L-type calcium currents. Is a receptor for leukotriene B4, a potent chemoattractant involved in inflammation and immune response. This Bos taurus (Bovine) protein is Leukotriene B4 receptor 1 (LTB4R).